The following is a 321-amino-acid chain: AA9 family lytic polysaccharide monooxygenase D (321 aa).

The first 21 residues, 1–21 (MRSTIVATFAAGLVVASLVAA), serve as a signal peptide directing secretion. Histidine 22 lines the Cu(2+) pocket. 2 cysteine pairs are disulfide-bonded: cysteine 75–cysteine 192 and cysteine 116–cysteine 120. N-linked (GlcNAc...) asparagine glycosylation is present at asparagine 78. Histidine 105 contributes to the Cu(2+) binding site. An N-linked (GlcNAc...) asparagine glycan is attached at asparagine 152. O2 is bound by residues histidine 178 and glutamine 187. A Cu(2+)-binding site is contributed by tyrosine 189. A glycan (N-linked (GlcNAc...) asparagine) is linked at asparagine 266.

It belongs to the polysaccharide monooxygenase AA9 family. Cu(2+) is required as a cofactor.

It localises to the secreted. It catalyses the reaction [(1-&gt;4)-beta-D-glucosyl]n+m + reduced acceptor + O2 = 4-dehydro-beta-D-glucosyl-[(1-&gt;4)-beta-D-glucosyl]n-1 + [(1-&gt;4)-beta-D-glucosyl]m + acceptor + H2O.. Its function is as follows. Lytic polysaccharide monooxygenase (LPMO) that depolymerizes crystalline and amorphous polysaccharides via the oxidation of scissile alpha- or beta-(1-4)-glycosidic bonds, yielding C1 or C4 oxidation products. Catalysis by LPMOs requires the reduction of the active-site copper from Cu(II) to Cu(I) by a reducing agent and H(2)O(2) or O(2) as a cosubstrate. The polypeptide is AA9 family lytic polysaccharide monooxygenase D (Geotrichum candidum (Oospora lactis)).